The following is a 774-amino-acid chain: Beta-D-xylosidase 1 (774 aa).

An N-terminal signal peptide occupies residues Met1 to Ser30. An N-linked (GlcNAc...) asparagine glycan is attached at Asn131. Asp296 is a catalytic residue. N-linked (GlcNAc...) asparagine glycosylation is present at Asn658.

It belongs to the glycosyl hydrolase 3 family. Expressed in leaves, stems, seedlings, roots, inflorescences, siliques and developing seeds. Expressed in the vasculature of the roots, leaves, flowers and silique. Expressed in tissues undergoing secondary cell wall thickening such as protoxylem, metaxylem, intrafascicular cambium and fibers.

The protein localises to the secreted. The protein resides in the extracellular space. It localises to the extracellular matrix. The catalysed reaction is Hydrolysis of terminal non-reducing alpha-L-arabinofuranoside residues in alpha-L-arabinosides.. Its function is as follows. Involved in pectic arabinan modification in mucilage secretory cells. Also acts as a beta-D-xylosidase during the remodeling of xylans in vascular development. The sequence is that of Beta-D-xylosidase 1 (BXL1) from Arabidopsis thaliana (Mouse-ear cress).